Consider the following 494-residue polypeptide: MTNIGGPVVENASIEHPVISEEEGAAAFARVMAQLKAQVGIEAYTSWFGRLKLAEYSRNLVKLSVPTAFLRSWINNHYGSLLTNLWKQENSAILRVEVIVRGMKRVSKGVVCRTSAAPVVLEGQTASSFVESYTEPSVKDIEAGVFGSPLDSRYTFESFVEGSSNRVALAAARSIAEGHKSALRFNPLFIHASVGLGKTHLLQAVAAAALKRLMPARVIYLTAEYFMWRFATAIRDNAALSFKEQLRDIDLLIIDDMQFLQGKSIQNEFCHLLNMLLDSAKQVVVAADRPPAELESLDLRVRSRLQGGVALEIEVPDYEMRLKMLRQRLKVVQQDDNMVVISDEVLQYIAKTVLGSGRDIEGAFNQLLFRQSFESDLSLERIDELLGHLTRSGESKRIRIEEIQRAVARHYNVSKQDLLSNRRTRTVVKPRQVAMYLAKMLTPRSLPEIGRRFGGRDHTTVLHAVRKIEDLVCDDQTLAKELELLKRLIGEQAA.

Residues 1–103 (MTNIGGPVVE…LRVEVIVRGM (103 aa)) form a domain I, interacts with DnaA modulators region. A domain II region spans residues 103–148 (MKRVSKGVVCRTSAAPVVLEGQTASSFVESYTEPSVKDIEAGVFGS). A domain III, AAA+ region region spans residues 149 to 371 (PLDSRYTFES…GAFNQLLFRQ (223 aa)). 4 residues coordinate ATP: G195, G197, K198, and T199. Residues 372-494 (SFESDLSLER…LKRLIGEQAA (123 aa)) are domain IV, binds dsDNA.

It belongs to the DnaA family. Oligomerizes as a right-handed, spiral filament on DNA at oriC.

The protein localises to the cytoplasm. In terms of biological role, plays an essential role in the initiation and regulation of chromosomal replication. ATP-DnaA binds to the origin of replication (oriC) to initiate formation of the DNA replication initiation complex once per cell cycle. Binds the DnaA box (a 9 base pair repeat at the origin) and separates the double-stranded (ds)DNA. Forms a right-handed helical filament on oriC DNA; dsDNA binds to the exterior of the filament while single-stranded (ss)DNA is stabiized in the filament's interior. The ATP-DnaA-oriC complex binds and stabilizes one strand of the AT-rich DNA unwinding element (DUE), permitting loading of DNA polymerase. After initiation quickly degrades to an ADP-DnaA complex that is not apt for DNA replication. Binds acidic phospholipids. This is Chromosomal replication initiator protein DnaA from Bartonella quintana (strain Toulouse) (Rochalimaea quintana).